The primary structure comprises 283 residues: Calpastatin (283 aa).

A compositionally biased stretch (polar residues) spans 1–15 (MNPTETKAIPVSQQM). Disordered regions lie at residues 1–186 (MNPT…SDPM) and 212–283 (NEGI…KVEK). Residues 21–30 (PNKKKHKKQA) are compositionally biased toward basic residues. Residue Lys32 forms a Glycyl lysine isopeptide (Lys-Gly) (interchain with G-Cter in SUMO2) linkage. Basic and acidic residues predominate over residues 46-65 (VVHEKKSQEGKPKEHTEQKS). The residue at position 50 (Lys50) is an N6-acetyllysine. A Phosphoserine modification is found at Ser87. The span at 107-122 (VSAGGESVAGVAATSG) shows a compositional bias: low complexity. Ser133 bears the Phosphoserine mark. Position 135 is a phosphothreonine (Thr135). One copy of the Inhibitory domain 1 repeat lies at 170 to 222 (IEEENTTYTGPEVSDPMSSTYIEELGKREVTIPPKYRELLAKNEGITGPPADS). Ser222 and Ser243 each carry phosphoserine. Basic and acidic residues predominate over residues 249 to 258 (KKTEKEESTE).

It belongs to the protease inhibitor I27 (calpastatin) family.

Its function is as follows. Specific inhibition of calpain (calcium-dependent cysteine protease). Plays a key role in postmortem tenderization of meat and have been proposed to be involved in muscle protein degradation in living tissue. The chain is Calpastatin (CAST) from Chlorocebus aethiops (Green monkey).